The sequence spans 188 residues: Capsid protein (188 aa).

Belongs to the tymoviruses capsid protein family.

It is found in the virion. In terms of biological role, self-assembles to form a T=3 icosahedral capsid composed of 180 copies of the capsid protein. The capsid encapsulates the single-stranded RNA genome. The protein is Capsid protein of Solanum lycopersicum (Tomato).